Reading from the N-terminus, the 96-residue chain is MFIELVHIGFGNILAMNRVIAISPPSSAPIKRIIQESRTKGFLIDMTNGRKTKAVIFTDSGHIVLAALAPETITGRLSISRGGAVKPELVDDKLEL.

Belongs to the RemA family.

This chain is Putative regulatory protein DET0036, found in Dehalococcoides mccartyi (strain ATCC BAA-2266 / KCTC 15142 / 195) (Dehalococcoides ethenogenes (strain 195)).